A 478-amino-acid chain; its full sequence is Sugar transporter ERD6-like 15 (478 aa).

12 consecutive transmembrane segments (helical) span residues 31–51 (FVLA…IIGY), 67–87 (IADY…GALI), 106–126 (ILFV…LLDL), 129–149 (LLQG…ITEI), 161–181 (FAQL…TIVA), 185–205 (LAIL…FIPE), 267–287 (AFSL…GLNG), 305–325 (FGFI…TVLV), 333–353 (LLLV…ISFF), 366–386 (VLAL…MGSI), 406–426 (MCNL…SYLL), and 432–452 (GTFL…AKLV).

This sequence belongs to the major facilitator superfamily. Sugar transporter (TC 2.A.1.1) family.

It is found in the membrane. In terms of biological role, sugar transporter. The polypeptide is Sugar transporter ERD6-like 15 (Arabidopsis thaliana (Mouse-ear cress)).